The sequence spans 159 residues: Large ribosomal subunit protein uL11 (159 aa).

Belongs to the universal ribosomal protein uL11 family. Part of the ribosomal stalk of the 50S ribosomal subunit. Interacts with L10 and the large rRNA to form the base of the stalk. L10 forms an elongated spine to which L12 dimers bind in a sequential fashion forming a multimeric L10(L12)X complex.

In terms of biological role, forms part of the ribosomal stalk which helps the ribosome interact with GTP-bound translation factors. This is Large ribosomal subunit protein uL11 from Methanococcus maripaludis (strain C6 / ATCC BAA-1332).